We begin with the raw amino-acid sequence, 116 residues long: Large ribosomal subunit protein bL19 (116 aa).

Belongs to the bacterial ribosomal protein bL19 family.

Its function is as follows. This protein is located at the 30S-50S ribosomal subunit interface and may play a role in the structure and function of the aminoacyl-tRNA binding site. This Pseudomonas fluorescens (strain ATCC BAA-477 / NRRL B-23932 / Pf-5) protein is Large ribosomal subunit protein bL19.